A 337-amino-acid chain; its full sequence is Glutaminase-asparaginase (337 aa).

Positions 10 to 337 constitute an Asparaginase/glutaminase domain; sequence ANVVILATGG…KELQRIFWEY (328 aa). T20 serves as the catalytic Acyl-ester intermediate. Residues S67 and 100–101 each bind substrate; that span reads TD.

This sequence belongs to the asparaginase 1 family. As to quaternary structure, homotetramer.

The protein localises to the periplasm. It catalyses the reaction L-glutamine + H2O = L-glutamate + NH4(+). The catalysed reaction is L-asparagine + H2O = L-aspartate + NH4(+). This chain is Glutaminase-asparaginase (ansB), found in Pseudomonas sp. (strain ATCC 29598 / 7A).